The following is a 248-amino-acid chain: Gamma-interferon-inducible lysosomal thiol reductase (248 aa).

An N-terminal signal peptide occupies residues 1–26; it reads MSWSPILPFLSLLLLLFPLEVPRAAT. A propeptide spans 27-54 (removed in mature form); sequence ASLSQASSEGTTTCKAHDVCLLGPRPLP. Cysteines 69 and 72 form a disulfide. N-linked (GlcNAc...) asparagine glycosylation is found at Asn92 and Asn105. Residues 231 to 248 constitute a propeptide, removed in mature form; sequence KPDICSSIADSPRKVCYK.

This sequence belongs to the GILT family. Dimer; disulfide-linked. Post-translationally, N-glycosylated. Sugar chains contain mannose-6-phosphate. In terms of processing, synthesized as a 35 kDa precursor which is then processed into the mature 30 kDa form via cleavage of N-terminal and C-terminal propeptides. Processing of the precursor is mediated by multiple lysosomal proteases.

It is found in the secreted. It localises to the lysosome. In terms of biological role, lysosomal thiol reductase that can reduce protein disulfide bonds. May facilitate the complete unfolding of proteins destined for lysosomal degradation. Plays an important role in antigen processing. Facilitates the generation of MHC class II-restricted epitodes from disulfide bond-containing antigen by the endocytic reduction of disulfide bonds. Also facilitates MHC class I-restricted recognition of exogenous antigens containing disulfide bonds by CD8+ T-cells or crosspresentation. The chain is Gamma-interferon-inducible lysosomal thiol reductase (Ifi30) from Mus musculus (Mouse).